A 349-amino-acid polypeptide reads, in one-letter code: tRNA uridine(34) hydroxylase (349 aa).

The 95-residue stretch at 146–240 (DDPDAVFIDM…YARRAREQGL (95 aa)) folds into the Rhodanese domain. The active-site Cysteine persulfide intermediate is the Cys200. Over residues 316-328 (EEQRRRRAGRENG) the composition is skewed to basic and acidic residues. Residues 316 to 349 (EEQRRRRAGRENGNKIFNKSRGRLNTKLGIPDPE) form a disordered region.

The protein belongs to the TrhO family.

It catalyses the reaction uridine(34) in tRNA + AH2 + O2 = 5-hydroxyuridine(34) in tRNA + A + H2O. In terms of biological role, catalyzes oxygen-dependent 5-hydroxyuridine (ho5U) modification at position 34 in tRNAs. This chain is tRNA uridine(34) hydroxylase, found in Enterobacter sp. (strain 638).